Reading from the N-terminus, the 253-residue chain is H repeat-associated putative transposase YbfD (253 aa).

The protein belongs to the transposase 11 family.

This Escherichia coli (strain K12) protein is H repeat-associated putative transposase YbfD (ybfD).